The chain runs to 274 residues: Putative pyruvate, phosphate dikinase regulatory protein (274 aa).

An ADP-binding site is contributed by 151–158; that stretch reads GVSRTSKT.

The protein belongs to the pyruvate, phosphate/water dikinase regulatory protein family. PDRP subfamily.

The enzyme catalyses N(tele)-phospho-L-histidyl/L-threonyl-[pyruvate, phosphate dikinase] + ADP = N(tele)-phospho-L-histidyl/O-phospho-L-threonyl-[pyruvate, phosphate dikinase] + AMP + H(+). The catalysed reaction is N(tele)-phospho-L-histidyl/O-phospho-L-threonyl-[pyruvate, phosphate dikinase] + phosphate + H(+) = N(tele)-phospho-L-histidyl/L-threonyl-[pyruvate, phosphate dikinase] + diphosphate. Functionally, bifunctional serine/threonine kinase and phosphorylase involved in the regulation of the pyruvate, phosphate dikinase (PPDK) by catalyzing its phosphorylation/dephosphorylation. The chain is Putative pyruvate, phosphate dikinase regulatory protein from Pelagibacter ubique (strain HTCC1062).